We begin with the raw amino-acid sequence, 243 residues long: MPSGMFSIDNILAARPRCKESLLLPQNGPLLFSSLGESLYGPADYSGFYNRTVAPTSALQGVNGSRLGYNNYYYGQLHLQTPVGPSCCGAVQALGTQQCSCVPSATAYDGAGSVLIPPVPHQMLPYMNVGTLSRTELQLLNQLHCRRKRRHRTIFTDEQLEALENLFQETKYPDVGTREQLARRVHLREEKVEVWFKNRRAKWRRQKRSSSEESENAQKWNKSSKNSAEKRDEQAKSDLDSDS.

Residues 148–207 constitute a DNA-binding region (homeobox); the sequence is KRRHRTIFTDEQLEALENLFQETKYPDVGTREQLARRVHLREEKVEVWFKNRRAKWRRQK. The segment at 201–243 is disordered; that stretch reads AKWRRQKRSSSEESENAQKWNKSSKNSAEKRDEQAKSDLDSDS. Residues 217 to 226 show a composition bias toward polar residues; that stretch reads AQKWNKSSKN. Positions 227 to 243 are enriched in basic and acidic residues; the sequence is SAEKRDEQAKSDLDSDS.

The protein belongs to the paired homeobox family. Bicoid subfamily.

The protein resides in the nucleus. Plays a central role in executing Spemann's organizer phenomenon (the dorsal blastopore lip of the early Xenopus laevis gastrula can organize a complete secondary body axis when transplanted to another embryo). The sequence is that of Homeobox protein goosecoid isoform B (gsc-b) from Xenopus laevis (African clawed frog).